The following is a 695-amino-acid chain: Probable pre-mRNA-splicing factor ATP-dependent RNA helicase DEAH9 (695 aa).

A Helicase ATP-binding domain is found at 58–223 (LYLVENHATT…FNSSKKRHAP (166 aa)). 71-78 (GETGSGKT) provides a ligand contact to ATP. Positions 170–173 (DEAH) match the DEAH box motif. Residues 261–438 (SVVSTILLIN…STVIQLKALG (178 aa)) enclose the Helicase C-terminal domain.

It belongs to the DEAD box helicase family. DEAH subfamily. DDX35 sub-subfamily.

The enzyme catalyses ATP + H2O = ADP + phosphate + H(+). Functionally, may be involved in pre-mRNA splicing. The protein is Probable pre-mRNA-splicing factor ATP-dependent RNA helicase DEAH9 of Arabidopsis thaliana (Mouse-ear cress).